The primary structure comprises 211 residues: LexA repressor (211 aa).

A DNA-binding region (H-T-H motif) is located at residues 27-47; sequence QTEIARAFGFKGVRAVQHHLD. Residues S131 and K168 each act as for autocatalytic cleavage activity in the active site.

It belongs to the peptidase S24 family. As to quaternary structure, homodimer.

It catalyses the reaction Hydrolysis of Ala-|-Gly bond in repressor LexA.. In terms of biological role, represses a number of genes involved in the response to DNA damage (SOS response), including recA and lexA. In the presence of single-stranded DNA, RecA interacts with LexA causing an autocatalytic cleavage which disrupts the DNA-binding part of LexA, leading to derepression of the SOS regulon and eventually DNA repair. This is LexA repressor from Xylella fastidiosa (strain 9a5c).